We begin with the raw amino-acid sequence, 5488 residues long: Polyketide synthase PksN (5488 aa).

The interval 3–301 is condensation; sequence RQLKSPLSEG…NMMAVRSKNI (299 aa). Residues 165 to 205 form a WD 1 repeat; it reads QQPSTADYYDFVDWENRMLTGREGEEHLAYWKEQLSGSLPV. Positions 493-903 are adenylation; sequence TYKEVDEKST…EFPGILDQAV (411 aa). The WD 2 repeat unit spans residues 965-1006; that stretch reads RKELEKREIVFNRRKPNHLQLTEIEDQVLRIWEETLKVSGFG. Residues 983–1058 enclose the Carrier 1 domain; it reads LQLTEIEDQV…AISEYILEMK (76 aa). S1018 bears the O-(pantetheine 4'-phosphoryl)serine mark. Residues 1089–1515 enclose the Ketosynthase family 3 (KS3) 1 domain; that stretch reads DDSVAIVGIS…GTNAHAIFEQ (427 aa). Active-site for beta-ketoacyl synthase 1 activity residues include C1261, H1397, and H1437. Residues 1700–1826 are N-terminal hotdog fold 1; sequence HPLVHHNTSV…GKAELIQLKR (127 aa). A PKS/mFAS DH 1 domain is found at 1700–1992; that stretch reads HPLVHHNTSV…TRVMEADIQT (293 aa). H1729 acts as the Proton acceptor; for dehydratase activity 1 in catalysis. Positions 1840–1992 are C-terminal hotdog fold 1; the sequence is DQSKMDAASF…TRVMEADIQT (153 aa). D1900 functions as the Proton donor; for dehydratase activity 1 in the catalytic mechanism. A WD 3 repeat occupies 2165–2204; that stretch reads KQAKGDGSKPWKDNGVYLISGGAGGLGHIFAKEIAEQTKN. The Carrier 2 domain maps to 2448–2525; it reads SLLDKVKAML…AFGKHLSEEY (78 aa). Residue S2485 is modified to O-(pantetheine 4'-phosphoryl)serine. The region spanning 2576 to 3012 is the Ketosynthase family 3 (KS3) 2 domain; that stretch reads PEPIAIVGIS…GVNAHVIIEE (437 aa). Active-site for beta-ketoacyl synthase 2 activity residues include C2747, H2882, and H2928. Residues 3038–3109 adopt a coiled-coil conformation; that stretch reads KNEARLKEHA…AAEKSGVEDV (72 aa). The N-terminal hotdog fold 2 stretch occupies residues 3207–3332; sequence HPLMHQNTSN…GSAVLNPAEN (126 aa). The PKS/mFAS DH 2 domain maps to 3207–3492; it reads HPLMHQNTSN…FRAAEGGSGS (286 aa). Residue H3236 is the Proton acceptor; for dehydratase activity 2 of the active site. Positions 3346 to 3492 are C-terminal hotdog fold 2; sequence QESHFSVNEV…FRAAEGGSGS (147 aa). Residue D3408 is the Proton donor; for dehydratase activity 2 of the active site. Residues 3626–3655 are a coiled coil; it reads DSHENVESVIEKLKENKRHTEDQHIKYEKG. The stretch at 3666-3705 is one WD 4 repeat; it reads QIDDREISMPWRDKGVYLITGGAGGLGFIFAKEIARQAEQ. The 75-residue stretch at 3952 to 4026 folds into the Carrier 3 domain; the sequence is DHIQEVLKQT…AFAGYLSEEY (75 aa). O-(pantetheine 4'-phosphoryl)serine is present on S3986. The Ketosynthase family 3 (KS3) 3 domain occupies 4076-4511; that stretch reads PEPIAIVGMS…GVNAHVVIEE (436 aa). Active-site for beta-ketoacyl synthase 3 activity residues include C4245, H4380, and H4427. The interval 4706-4830 is N-terminal hotdog fold 3; that stretch reads HPLIHVNTSD…GSASIRGAGD (125 aa). The PKS/mFAS DH 3 domain maps to 4706–4988; sequence HPLIHVNTSD…SRLLEEGIQP (283 aa). Residue H4735 is the Proton acceptor; for dehydratase activity 3 of the active site. Residues 4844 to 4988 are C-terminal hotdog fold 3; sequence SLSTLSHDQC…SRLLEEGIQP (145 aa). D4906 serves as the catalytic Proton donor; for dehydratase activity 3. Residues 5206–5244 form a WD 5 repeat; the sequence is HNNQPVHTKYKHGGVYVVIGGAGGIGEAWSEYMIRTYQA. Residues 5275–5303 are a coiled coil; that stretch reads IQADAANREELERAYETMKQTHREINGII.

Belongs to the ATP-dependent AMP-binding enzyme family. Requires pantetheine 4'-phosphate as cofactor.

The protein localises to the cytoplasm. It participates in antibiotic biosynthesis; bacillaene biosynthesis. Involved in some intermediate steps for the synthesis of the antibiotic polyketide bacillaene which is involved in secondary metabolism. This is Polyketide synthase PksN (pksN) from Bacillus subtilis (strain 168).